The chain runs to 114 residues: Large ribosomal subunit protein uL18 (114 aa).

The protein belongs to the universal ribosomal protein uL18 family. In terms of assembly, part of the 50S ribosomal subunit; part of the 5S rRNA/L5/L18/L25 subcomplex. Contacts the 5S and 23S rRNAs.

Functionally, this is one of the proteins that bind and probably mediate the attachment of the 5S RNA into the large ribosomal subunit, where it forms part of the central protuberance. The sequence is that of Large ribosomal subunit protein uL18 from Aster yellows phytoplasma.